A 390-amino-acid chain; its full sequence is Heparan sulfate glucosamine 3-O-sulfotransferase 3B1 (390 aa).

The interval 1–25 (MGQRLSGGRSCLDVPGRLLPQPPPP) is disordered. Residues 1 to 32 (MGQRLSGGRSCLDVPGRLLPQPPPPPPPVRRK) are Cytoplasmic-facing. A helical; Signal-anchor for type II membrane protein membrane pass occupies residues 33–53 (LALLFAMLCVWLYMFLYSCAG). The Lumenal segment spans residues 54-390 (SCAAAPGLLL…QMTGHDFGWD (337 aa)). A disordered region spans residues 74-133 (PPALATAPDGTPPRLPFRAPPATPLASGKEMAEGAASPEEQSPEVPDSPSPISSFFSGSG). Residues 83-96 (GTPPRLPFRAPPAT) are compositionally biased toward pro residues. Residues 123 to 133 (SPISSFFSGSG) show a composition bias toward low complexity. Residue 147 to 151 (KGGTR) participates in 3'-phosphoadenylyl sulfate binding. Substrate is bound by residues 169-175 (EPHFFDR) and 200-203 (KTPS). Residues R228 and S236 each contribute to the 3'-phosphoadenylyl sulfate site. N258 is a glycosylation site (N-linked (GlcNAc...) asparagine). 268–269 (WS) contacts substrate. Residue N329 is glycosylated (N-linked (GlcNAc...) asparagine). C336 and C348 form a disulfide bridge. 353–357 (KGRTH) provides a ligand contact to 3'-phosphoadenylyl sulfate.

The protein belongs to the sulfotransferase 1 family. As to expression, ubiquitous. Most abundant in liver and placenta, followed by heart and kidney.

It is found in the golgi apparatus membrane. The enzyme catalyses alpha-D-glucosaminyl-[heparan sulfate](n) + 3'-phosphoadenylyl sulfate = 3-sulfo-alpha-D-glucosaminyl-[heparan sulfate](n) + adenosine 3',5'-bisphosphate + H(+). Its function is as follows. Sulfotransferase that utilizes 3'-phospho-5'-adenylyl sulfate (PAPS) to catalyze the transfer of a sulfo group to an N-unsubstituted glucosamine linked to a 2-O-sulfo iduronic acid unit on heparan sulfate. Catalyzes the O-sulfation of glucosamine in IdoUA2S-GlcNS and also in IdoUA2S-GlcNH2. The substrate-specific O-sulfation generates an enzyme-modified heparan sulfate which acts as a binding receptor to Herpes simplex virus-1 (HSV-1) and permits its entry. Unlike HS3ST1/3-OST-1, does not convert non-anticoagulant heparan sulfate to anticoagulant heparan sulfate. The chain is Heparan sulfate glucosamine 3-O-sulfotransferase 3B1 (HS3ST3B1) from Homo sapiens (Human).